The following is a 204-amino-acid chain: Prephenate decarboxylase (204 aa).

It belongs to the prephenate decarboxylase family.

The protein resides in the cytoplasm. The enzyme catalyses prephenate + H(+) = 3-[(4R)-4-hydroxycyclohexa-1,5-dien-1-yl]-2-oxopropanoate + CO2. Its pathway is antibiotic biosynthesis; bacilysin biosynthesis. Its function is as follows. Part of the bacABCDEF operon responsible for the biosynthesis of the nonribosomally synthesized dipeptide antibiotic bacilysin, composed of L-alanine and L-anticapsin. Bacilysin is an irreversible inactivator of the glutaminase domain of glucosamine synthetase. BacA is an unusual prephenate decarboxylase that avoids the typical aromatization of the cyclohexadienol ring of prephenate. BacA catalyzes the protonation of prephenate (1-carboxy-4-hydroxy-alpha-oxo-2,5-cyclohexadiene-1-propanoic acid) at C6 position, followed by a decarboxylation to produce the endocyclic-delta(4),delta(8)-7R-dihydro-hydroxyphenylpyruvate (en-H2HPP). En-H2HPP is able to undergo a slow nonenzymatic isomerization to produce the exocyclic-delta(3),delta(5)-dihydro-hydroxyphenylpyruvate (ex-H2HPP). BacA isomerizes only the pro-R double bond in prephenate. In Bacillus subtilis, this protein is Prephenate decarboxylase.